The sequence spans 624 residues: Penicillin-binding protein 4 (624 aa).

The first 21 residues, 1–21 (MTMLRKIIGWILLLCIIPLFA), serve as a signal peptide directing secretion. The active-site Proton donor; for transglycosylase activity is the Glu-96. Ser-388 (acyl-ester intermediate; for transpeptidase activity) is an active-site residue.

In the N-terminal section; belongs to the glycosyltransferase 51 family. It in the C-terminal section; belongs to the transpeptidase family. Post-translationally, the N-terminus is blocked.

Its subcellular location is the cell membrane. The catalysed reaction is [GlcNAc-(1-&gt;4)-Mur2Ac(oyl-L-Ala-gamma-D-Glu-L-Lys-D-Ala-D-Ala)](n)-di-trans,octa-cis-undecaprenyl diphosphate + beta-D-GlcNAc-(1-&gt;4)-Mur2Ac(oyl-L-Ala-gamma-D-Glu-L-Lys-D-Ala-D-Ala)-di-trans,octa-cis-undecaprenyl diphosphate = [GlcNAc-(1-&gt;4)-Mur2Ac(oyl-L-Ala-gamma-D-Glu-L-Lys-D-Ala-D-Ala)](n+1)-di-trans,octa-cis-undecaprenyl diphosphate + di-trans,octa-cis-undecaprenyl diphosphate + H(+). It catalyses the reaction Preferential cleavage: (Ac)2-L-Lys-D-Ala-|-D-Ala. Also transpeptidation of peptidyl-alanyl moieties that are N-acyl substituents of D-alanine.. Its function is as follows. Cell wall formation. Synthesis of cross-linked peptidoglycan from the lipid intermediates. The enzyme has a penicillin-insensitive transglycosylase N-terminal domain (formation of linear glycan strands) and a penicillin-sensitive transpeptidase C-terminal domain (cross-linking of the peptide subunits). Has a partially redundant function with PBP-2A (pbpA) during spore outgrowth. In Bacillus subtilis (strain 168), this protein is Penicillin-binding protein 4.